Here is a 384-residue protein sequence, read N- to C-terminus: Lipid-A-disaccharide synthase (384 aa).

It belongs to the LpxB family.

It carries out the reaction a lipid X + a UDP-2-N,3-O-bis[(3R)-3-hydroxyacyl]-alpha-D-glucosamine = a lipid A disaccharide + UDP + H(+). The protein operates within bacterial outer membrane biogenesis; LPS lipid A biosynthesis. Condensation of UDP-2,3-diacylglucosamine and 2,3-diacylglucosamine-1-phosphate to form lipid A disaccharide, a precursor of lipid A, a phosphorylated glycolipid that anchors the lipopolysaccharide to the outer membrane of the cell. This chain is Lipid-A-disaccharide synthase, found in Gloeothece citriformis (strain PCC 7424) (Cyanothece sp. (strain PCC 7424)).